The chain runs to 630 residues: 1-deoxy-D-xylulose-5-phosphate synthase (630 aa).

Residues His-73 and 114–116 (SHA) each bind thiamine diphosphate. Position 146 (Asp-146) interacts with Mg(2+). Residues 147 to 148 (GA), Asn-176, Phe-287, and Glu-371 contribute to the thiamine diphosphate site. Residue Asn-176 participates in Mg(2+) binding.

The protein belongs to the transketolase family. DXPS subfamily. In terms of assembly, homodimer. Requires Mg(2+) as cofactor. Thiamine diphosphate serves as cofactor.

It catalyses the reaction D-glyceraldehyde 3-phosphate + pyruvate + H(+) = 1-deoxy-D-xylulose 5-phosphate + CO2. It participates in metabolic intermediate biosynthesis; 1-deoxy-D-xylulose 5-phosphate biosynthesis; 1-deoxy-D-xylulose 5-phosphate from D-glyceraldehyde 3-phosphate and pyruvate: step 1/1. Functionally, catalyzes the acyloin condensation reaction between C atoms 2 and 3 of pyruvate and glyceraldehyde 3-phosphate to yield 1-deoxy-D-xylulose-5-phosphate (DXP). The sequence is that of 1-deoxy-D-xylulose-5-phosphate synthase from Corynebacterium jeikeium (strain K411).